The chain runs to 494 residues: Cytochrome P450 2C44 (494 aa).

Residues 1 to 25 (MELLGLPTLALLVLVMSLSLLSVWT) form the signal peptide. Residue S131 is modified to Phosphoserine. 2 positions are modified to N6-acetyllysine: K253 and K379. C439 is a heme binding site.

The protein belongs to the cytochrome P450 family. Heme is required as a cofactor. Highly expressed in liver, particularly in hepatocytes and bile duct epithelial cells (at protein level). Expressed in nephron segments. Prominent expression is detected in proximal tubules at the corticomedullary junction (at protein level). Also expressed in renal cortical collecting duct. Lower expression levels are detected in adrenal glands.

The protein resides in the endoplasmic reticulum membrane. Its subcellular location is the microsome membrane. The enzyme catalyses (5Z,8Z,11Z,14Z)-eicosatetraenoate + reduced [NADPH--hemoprotein reductase] + O2 = (8R,9S)-epoxy-(5Z,11Z,14Z)-eicosatrienoate + oxidized [NADPH--hemoprotein reductase] + H2O + H(+). The catalysed reaction is (5Z,8Z,11Z,14Z)-eicosatetraenoate + reduced [NADPH--hemoprotein reductase] + O2 = (11R,12S)-epoxy-(5Z,8Z,14Z)-eicosatrienoate + oxidized [NADPH--hemoprotein reductase] + H2O + H(+). It carries out the reaction (5Z,8Z,11Z,14Z)-eicosatetraenoate + reduced [NADPH--hemoprotein reductase] + O2 = 14,15-epoxy-(5Z,8Z,11Z)-eicosatrienoate + oxidized [NADPH--hemoprotein reductase] + H2O + H(+). It catalyses the reaction (5Z,8Z,11Z,14Z,17Z)-eicosapentaenoate + reduced [NADPH--hemoprotein reductase] + O2 = 8,9-epoxy-(5Z,11Z,14Z,17Z)-eicosatetraenoate + oxidized [NADPH--hemoprotein reductase] + H2O + H(+). The enzyme catalyses (5Z,8Z,11Z,14Z,17Z)-eicosapentaenoate + reduced [NADPH--hemoprotein reductase] + O2 = 11,12-epoxy-(5Z,8Z,14Z,17Z)-eicosatetraenoate + oxidized [NADPH--hemoprotein reductase] + H2O + H(+). The catalysed reaction is (5Z,8Z,11Z,14Z,17Z)-eicosapentaenoate + reduced [NADPH--hemoprotein reductase] + O2 = 14,15-epoxy-(5Z,8Z,11Z,17Z)-eicosatetraenoate + oxidized [NADPH--hemoprotein reductase] + H2O + H(+). It carries out the reaction (5Z,8Z,11Z,14Z,17Z)-eicosapentaenoate + reduced [NADPH--hemoprotein reductase] + O2 = (17R,18S)-epoxy-(5Z,8Z,11Z,14Z)-eicosatetraenoate + oxidized [NADPH--hemoprotein reductase] + H2O + H(+). It catalyses the reaction (5Z,8Z,11Z,14Z,17Z)-eicosapentaenoate + reduced [NADPH--hemoprotein reductase] + O2 = (17S,18R)-epoxy-(5Z,8Z,11Z,14Z)-eicosatetraenoate + oxidized [NADPH--hemoprotein reductase] + H2O + H(+). The enzyme catalyses 20-hydroxy-(5Z,8Z,11Z,14Z)-eicosatetraenoate + reduced [NADPH--hemoprotein reductase] + O2 = 20-hydroxy-8,9-epoxy-(5Z,11Z,14Z)-eicosatrienoate + oxidized [NADPH--hemoprotein reductase] + H2O + H(+). It functions in the pathway lipid metabolism; arachidonate metabolism. Its function is as follows. A cytochrome P450 monooxygenase involved in polyunsaturated fatty acids (PUFAs) metabolism and signaling. Catalyzes preferentially the epoxidation of double bonds of PUFAs. Converts arachidonic acid (ARA, C20:4(n-6)) primarily to stereospecific products 8R,9S-epoxyeicosatrienoate (EET) and 11R,12S-EET. Plays a major role in the formation of EETs and hydroxy-EETs (HEETs) in kidney. Via EETs may inhibit the epithelial sodium channels (ENaCs) in nephron segments, preventing excessive sodium absorption during high dietary salt intake. Participates in the formation of anti-inflammatory hydroxyepoxyeicosatrienoic acids (HEETs) by converting 20-hydroxyeicosatetraenoic acid (20-HETE) to 20,8,9-HEET, an activator of PPARA. Metabolizes eicosapentaenoic acid (EPA, C20:5(n-3)) to epoxyeicosatetraenoic acid (EETeTr) regioisomers, 8,9-, 11,12-, 14,15-, and 17,18- EETeTr, preferentially producing 17R,18S enantiomer. Mechanistically, uses molecular oxygen inserting one oxygen atom into a substrate, and reducing the second into a water molecule, with two electrons provided by NADPH via cytochrome P450 reductase (CPR; NADPH-ferrihemoprotein reductase). This chain is Cytochrome P450 2C44, found in Mus musculus (Mouse).